A 694-amino-acid polypeptide reads, in one-letter code: Putative L-type lectin-domain containing receptor kinase II.2 (694 aa).

Positions 1–24 are cleaved as a signal peptide; the sequence is MAGVLRSLRFWMIICVQVLSLVLA. Over 25–318 the chain is Extracellular; the sequence is QDRDEFVYHD…PTSRSKDSKN (294 aa). Residues 27–272 are legume-lectin like; sequence RDEFVYHDFS…DQYILGWSFK (246 aa). N-linked (GlcNAc...) asparagine glycans are attached at residues Asn-57, Asn-58, Asn-73, Asn-131, Asn-172, Asn-183, Asn-201, Asn-208, Asn-240, and Asn-246. The interval 283–314 is disordered; sequence SKILDPPNRPPPPSSPPPPPPPPPTPPTSRSK. Over residues 289–309 the composition is skewed to pro residues; the sequence is PNRPPPPSSPPPPPPPPPTPP. The helical transmembrane segment at 319 to 339 threads the bilayer; it reads IIIICVTVTSIAFLLMLGGFL. Over 340-694 the chain is Cytoplasmic; the sequence is YLYKKKKYAE…EDVTILFGGR (355 aa). A Protein kinase domain is found at 375 to 650; the sequence is FRENRLLGAG…IQYLEGNATI (276 aa). ATP-binding positions include 381-389 and Lys-403; that span reads LGAGGFGKV. Residue Asp-500 is the Proton acceptor of the active site.

In the C-terminal section; belongs to the protein kinase superfamily. Ser/Thr protein kinase family. The protein in the N-terminal section; belongs to the leguminous lectin family.

Its subcellular location is the cell membrane. The enzyme catalyses L-seryl-[protein] + ATP = O-phospho-L-seryl-[protein] + ADP + H(+). It catalyses the reaction L-threonyl-[protein] + ATP = O-phospho-L-threonyl-[protein] + ADP + H(+). The polypeptide is Putative L-type lectin-domain containing receptor kinase II.2 (LECRK22) (Arabidopsis thaliana (Mouse-ear cress)).